We begin with the raw amino-acid sequence, 502 residues long: Glycerol kinase (502 aa).

T13 provides a ligand contact to ADP. Positions 13, 14, and 15 each coordinate ATP. Residue T13 participates in sn-glycerol 3-phosphate binding. R17 lines the ADP pocket. Sn-glycerol 3-phosphate-binding residues include R83, E84, Y136, and D246. R83, E84, Y136, D246, and Q247 together coordinate glycerol. Residues T268 and G311 each contribute to the ADP site. The ATP site is built by T268, G311, Q315, and G412. ADP is bound by residues G412 and N416.

The protein belongs to the FGGY kinase family.

It carries out the reaction glycerol + ATP = sn-glycerol 3-phosphate + ADP + H(+). Its pathway is polyol metabolism; glycerol degradation via glycerol kinase pathway; sn-glycerol 3-phosphate from glycerol: step 1/1. With respect to regulation, inhibited by fructose 1,6-bisphosphate (FBP). In terms of biological role, key enzyme in the regulation of glycerol uptake and metabolism. Catalyzes the phosphorylation of glycerol to yield sn-glycerol 3-phosphate. In Francisella tularensis subsp. holarctica (strain FTNF002-00 / FTA), this protein is Glycerol kinase.